A 484-amino-acid polypeptide reads, in one-letter code: UDP-glycosyltransferase 73B4 (484 aa).

Histidine 18 serves as the catalytic Proton acceptor. Residues histidine 18 and asparagine 89 each coordinate an anthocyanidin. The active-site Charge relay is the aspartate 129. UDP-alpha-D-glucose contacts are provided by alanine 356, glutamine 358, histidine 373, tryptophan 376, asparagine 377, serine 378, and glutamate 381. Position 396 (alanine 396) interacts with an anthocyanidin. Residues glutamate 397 and glutamine 398 each contribute to the UDP-alpha-D-glucose site.

The protein belongs to the UDP-glycosyltransferase family. In terms of tissue distribution, specifically expressed in roots.

The catalysed reaction is a flavonol + UDP-alpha-D-glucose = a flavonol 3-O-beta-D-glucoside + UDP + H(+). In terms of biological role, possesses quercetin 3-O-glucosyltransferase and low 7-O-glucosyltransferase activities in vitro. Also active in vitro on benzoates and benzoate derivatives. Can detoxify the explosive 2,4,6-trinitrotoluene in plant by forming O- or C-glucose conjugates. The chain is UDP-glycosyltransferase 73B4 (UGT73B4) from Arabidopsis thaliana (Mouse-ear cress).